Consider the following 817-residue polypeptide: DNA gyrase subunit A (817 aa).

The Topo IIA-type catalytic domain occupies 39 to 505 (LPDARDGLKP…AVEDVSIEDL (467 aa)). Catalysis depends on Y127, which acts as the O-(5'-phospho-DNA)-tyrosine intermediate. The GyrA-box motif lies at 532–538 (QGRGGKG).

Belongs to the type II topoisomerase GyrA/ParC subunit family. Heterotetramer, composed of two GyrA and two GyrB chains. In the heterotetramer, GyrA contains the active site tyrosine that forms a transient covalent intermediate with DNA, while GyrB binds cofactors and catalyzes ATP hydrolysis.

It localises to the cytoplasm. It catalyses the reaction ATP-dependent breakage, passage and rejoining of double-stranded DNA.. Its function is as follows. A type II topoisomerase that negatively supercoils closed circular double-stranded (ds) DNA in an ATP-dependent manner to modulate DNA topology and maintain chromosomes in an underwound state. Negative supercoiling favors strand separation, and DNA replication, transcription, recombination and repair, all of which involve strand separation. Also able to catalyze the interconversion of other topological isomers of dsDNA rings, including catenanes and knotted rings. Type II topoisomerases break and join 2 DNA strands simultaneously in an ATP-dependent manner. The chain is DNA gyrase subunit A from Aminobacterium colombiense (strain DSM 12261 / ALA-1).